The following is a 242-amino-acid chain: Terpene cyclase dpchB (242 aa).

7 helical membrane-spanning segments follow: residues Val-16 to Val-36, Ala-51 to Phe-71, Tyr-78 to Val-95, Leu-114 to Val-134, Ala-141 to Cys-161, Ser-169 to Ile-189, and Ile-207 to Val-227.

Belongs to the paxB family.

The protein resides in the membrane. Its pathway is secondary metabolite biosynthesis; terpenoid biosynthesis. Terpene cyclase; part of the gene cluster that mediates the biosynthesis of the diterpenoid pyrones higginsianins A and B. The first step of the pathway is the synthesis of the alpha-pyrone moiety by the polyketide synthase dpchA via condensation of one acetyl-CoA starter unit with 3 malonyl-CoA units and 2 methylations. The alpha-pyrone is then combined with geranylgeranyl pyrophosphate (GGPP) formed by the GGPP synthase dpchD through the action of the prenyltransferase dpchC to yield a linear alpha-pyrone diterpenoid. Subsequent steps in the diterpenoid pyrone biosynthetic pathway involve the decalin core formation, which is initiated by the epoxidation of the C10-C11 olefin by the FAD-dependent oxidoreductase dpchE, and is followed by a cyclization cascade catalyzed by the terpene cyclase dpchB. The short chain dehydrogenase/reductase dpchG then oxidizes the 8S hydroxy group to a ketone and the short chain dehydrogenase/reductase dpchH reduces the ketone to the 8R hydroxy group to yield higginsianin B. Finally, the FAD-dependent oxidoreductase dpchF converts higginsianin B into higginsianin A. In Colletotrichum higginsianum (strain IMI 349063) (Crucifer anthracnose fungus), this protein is Terpene cyclase dpchB.